A 258-amino-acid chain; its full sequence is Peptidase inhibitor 15 (258 aa).

The first 21 residues, 1–21 (MIEMISISAAFLLSLLCETCG), serve as a signal peptide directing secretion. The propeptide occupies 22–60 (LVLPKSSDLAIAASNYTIIKPDLSARLDPVKAPKARRKR). Asn36 and Asn124 each carry an N-linked (GlcNAc...) asparagine glycan. One can recognise an SCP domain in the interval 71 to 211 (VEYHNQVRGK…RRAVYLVCNY (141 aa)).

The protein belongs to the CRISP family.

It is found in the secreted. Functionally, serine protease inhibitor which displays weak inhibitory activity against trypsin. May be involved in facial patterning during embryonic development. The protein is Peptidase inhibitor 15 (pi15) of Xenopus laevis (African clawed frog).